The primary structure comprises 213 residues: MGGVGLFYVGAVLIIDGLMLLGRISPRGATPLNFFVGGLQVVTPTVLILQSGGDAAVIFAASGLYLFGFTYLWVAINNVTDWDGEGLGWFSLFVAIAALGYSWHAFTAEADPAFGVIWLLWAVLWFMLFLLLGLGHDALGPAVGFVAVAEGVITAAVPAFLIVSGNWETGPLPAAVIAVIGFAAVVLAYPIGRRLAAPSVTNPPPAALAATTR.

6 consecutive transmembrane segments (helical) span residues 4–20 (VGLFYVGAVLIIDGLML), 32–48 (LNFFVGGLQVVTPTVLI), 56–72 (AVIFAASGLYLFGFTYL), 116–132 (VIWLLWAVLWFMLFLLL), 146–162 (VAVAEGVITAAVPAFLI), and 172–188 (LPAAVIAVIGFAAVVLA).

The protein belongs to the AmiS/UreI family.

It localises to the cell membrane. Its function is as follows. Possible transporter that might be responsible for the adsorption of amidase substrates or release of their hydrolysis products. This is Putative amidate substrates transporter protein from Mycolicibacterium smegmatis (Mycobacterium smegmatis).